Reading from the N-terminus, the 460-residue chain is Serine incorporator 5 (460 aa).

Topologically, residues 1–36 (MSARCCAGQLACCCGSAGCALCCGCCPKFRQSRSTR) are extracellular. Residues 37–57 (FMYLFYFTLVIIPCCVMMSPS) form a helical membrane-spanning segment. Residues 58–89 (VMKQMTEHIPFFEDFCKGIKAGDTCENLVGYS) are Cytoplasmic-facing. A helical membrane pass occupies residues 90–110 (AVYRVCFGMACFFFVFCVLTF). The Extracellular segment spans residues 111 to 124 (KVNNSKSCRASIHN). Asparagine 113 carries an N-linked (GlcNAc...) asparagine glycan. The chain crosses the membrane as a helical span at residues 125–145 (GFWFFKLLLLGAMCSGAFFIP). The Cytoplasmic segment spans residues 146-156 (DQETFLNVWRY). The chain crosses the membrane as a helical span at residues 157-177 (VGAVGSFFFICIQLLLIVEFA). The Extracellular portion of the chain corresponds to 178 to 197 (HKWNKNWTAGTVRNKLWYAS). A glycan (N-linked (GlcNAc...) asparagine) is linked at asparagine 183. The chain crosses the membrane as a helical span at residues 198–218 (LSLALIMYSIAVGGLALMAVF). The Cytoplasmic portion of the chain corresponds to 219–229 (YTQWDDCMDNK). Residues 230-250 (ILLGVHGGLCVLISLAAISPC) form a helical membrane-spanning segment. At 251-258 (VQNRQPHS) the chain is on the extracellular side. Residues 259–279 (GLLQPGLISCYVTYLTFSALT) form a helical membrane-spanning segment. Residues 280-309 (SKPEKVVKDEHGKNVTICVPDFGQDFRRDE) are Cytoplasmic-facing. A helical transmembrane segment spans residues 310–330 (SMVTWLGTLLLVVCISYSCLT). The Extracellular segment spans residues 331–390 (STTRSSSDALQRRYGAPELEVARCCFCFGPDGEDTEEQQNVKEGPRVIYDEKKGTVYSYS). A helical membrane pass occupies residues 391–411 (YFHFVLLLASLYVMMTLTSWF). The Cytoplasmic portion of the chain corresponds to 412–427 (HYENATIETFFVGSWS). The chain crosses the membrane as a helical span at residues 428-448 (IFWVKMASCWMCVLLYLWTLV). Residues 449-460 (APLCCPSRQFSV) are Extracellular-facing.

It belongs to the TDE1 family. As to expression, brain. Expressed at high levels in the white matter and the oligodendroglial cells of the brain. Expressed at low levels in the liver.

It localises to the cell membrane. It carries out the reaction a 1,2-diacyl-sn-glycero-3-phospho-L-serine(in) = a 1,2-diacyl-sn-glycero-3-phospho-L-serine(out). It catalyses the reaction a 1,2-diacyl-sn-glycero-3-phosphocholine(in) = a 1,2-diacyl-sn-glycero-3-phosphocholine(out). The catalysed reaction is a 1,2-diacyl-sn-glycero-3-phosphoethanolamine(in) = a 1,2-diacyl-sn-glycero-3-phosphoethanolamine(out). Its function is as follows. Restriction factor required to restrict infectivity of gammaretroviruses: acts by inhibiting an early step of viral infection. Impairs the penetration of the viral particle into the cytoplasm. Non-ATP-dependent, non-specific lipid transporter for phosphatidylserine, phosphatidylcholine, and phosphatidylethanolamine. Functions as a scramblase that flips lipids in both directions across the membrane. Phospholipid scrambling results in gammaretroviral surface exposure of phosphatidylserine and loss of membrane asymmetry, which leads to loss of infectivity. Enhances the incorporation of serine into phosphatidylserine and sphingolipids. May play a role in providing serine molecules for the formation of myelin glycosphingolipids in oligodendrocytes. In Rattus norvegicus (Rat), this protein is Serine incorporator 5 (Serinc5).